The chain runs to 177 residues: Bifunctional protein PyrR (177 aa).

The short motif at 99 to 111 (VVLVDDVLYTGRT) is the PRPP-binding element.

It belongs to the purine/pyrimidine phosphoribosyltransferase family. PyrR subfamily.

The enzyme catalyses UMP + diphosphate = 5-phospho-alpha-D-ribose 1-diphosphate + uracil. Its function is as follows. Regulates the transcription of the pyrimidine nucleotide (pyr) operon in response to exogenous pyrimidines. In terms of biological role, also displays a weak uracil phosphoribosyltransferase activity which is not physiologically significant. This is Bifunctional protein PyrR from Akkermansia muciniphila (strain ATCC BAA-835 / DSM 22959 / JCM 33894 / BCRC 81048 / CCUG 64013 / CIP 107961 / Muc).